The primary structure comprises 201 residues: ADP-ribosylation factor-related protein 1 (201 aa).

The residue at position 1 (M1) is an N-acetylmethionine. GTP contacts are provided by residues 24–31 (GLDNAGKT), 75–79 (DLGGQ), and 134–137 (NKQD).

The protein belongs to the small GTPase superfamily. Arf family. Interacts with SYS1.

The protein localises to the golgi apparatus. It is found in the trans-Golgi network. Trans-Golgi-associated GTPase that regulates protein sorting. Controls the targeting of ARL1 and its effector to the trans-Golgi. Required for the lipidation of chylomicrons in the intestine and required for VLDL lipidation in the liver. This chain is ADP-ribosylation factor-related protein 1 (Arfrp1), found in Mus musculus (Mouse).